Consider the following 271-residue polypeptide: Tryptophan synthase alpha chain (271 aa).

Residues Glu49 and Asp60 each act as proton acceptor in the active site.

The protein belongs to the TrpA family. Tetramer of two alpha and two beta chains.

It catalyses the reaction (1S,2R)-1-C-(indol-3-yl)glycerol 3-phosphate + L-serine = D-glyceraldehyde 3-phosphate + L-tryptophan + H2O. Its pathway is amino-acid biosynthesis; L-tryptophan biosynthesis; L-tryptophan from chorismate: step 5/5. The alpha subunit is responsible for the aldol cleavage of indoleglycerol phosphate to indole and glyceraldehyde 3-phosphate. The chain is Tryptophan synthase alpha chain from Burkholderia mallei (strain NCTC 10247).